Reading from the N-terminus, the 1806-residue chain is uncharacterized protein (1806 aa).

2 disordered regions span residues 38–131 (EASG…SPLF) and 158–282 (KAVS…KPRP). The span at 51 to 70 (KSPLRSPARLLPLPRLAPKP) shows a compositional bias: low complexity. S52, S56, S79, S87, S88, S92, and S128 each carry phosphoserine. Low complexity predominate over residues 82-100 (PSLRPSSTGPSPSGGLSEE). Over residues 226-236 (DTARPLVEPRP) the composition is skewed to basic and acidic residues. Phosphoserine is present on residues S244 and S284. 4 disordered regions span residues 299-320 (RKVA…ERPR), 355-431 (KEKM…GGEW), 456-604 (SESP…PEDD), and 627-696 (QSGR…ELRP). S366 is modified (phosphoserine). T378 is subject to Phosphothreonine. S384 carries the post-translational modification Phosphoserine. Basic and acidic residues predominate over residues 386-400 (WEEKAKLDPEPEKAA). S404 is subject to Phosphoserine. Over residues 412–422 (ELAEVKSRVAD) the composition is skewed to basic and acidic residues. Positions 456–470 (SESPLATPASPSAAP) are enriched in low complexity. A phosphoserine mark is found at S458 and S508. A compositionally biased stretch (polar residues) spans 514–523 (LFSSSASSNE). Composition is skewed to basic and acidic residues over residues 524 to 549 (VKYE…EGHS) and 564 to 573 (TLRDKSRQTE). At T600 the chain carries Phosphothreonine. 2 stretches are compositionally biased toward basic and acidic residues: residues 641 to 652 (AHARVSEPRPRP) and 661 to 674 (DPPD…ENSR). S749 carries the phosphoserine modification. 3 disordered regions span residues 860 to 901 (QHEG…QART), 969 to 989 (SPHV…ALRK), and 1000 to 1019 (QEVN…KQGS). A compositionally biased stretch (polar residues) spans 889–900 (RATNGPSDSQAR). Residues S969 and S981 each carry the phosphoserine modification. Positions 969–978 (SPHVGHRRTD) are enriched in basic and acidic residues. Phosphothreonine is present on T1059. 2 positions are modified to phosphoserine: S1063 and S1154. Residues 1134 to 1178 (RGSEDGPRPQSNWKESANKMSPSGGAPQTTPTLRSRPKDLPVRRK) form a disordered region. A compositionally biased stretch (polar residues) spans 1142 to 1166 (PQSNWKESANKMSPSGGAPQTTPTL). T1163 bears the Phosphothreonine mark. Residues 1169-1178 (RPKDLPVRRK) are compositionally biased toward basic and acidic residues. Phosphothreonine is present on residues T1179 and T1185. Disordered stretches follow at residues 1216 to 1265 (PGEA…PASS) and 1291 to 1493 (KSSP…VASV). S1224 carries the phosphoserine modification. T1226 carries the phosphothreonine modification. Composition is skewed to basic and acidic residues over residues 1244 to 1254 (EQRRRSLKEMP) and 1317 to 1331 (DPRK…DRKA). Position 1366 is a phosphoserine (S1366). 2 stretches are compositionally biased toward basic and acidic residues: residues 1393–1410 (DHPR…RAYS) and 1426–1437 (HEARERRREQPK). A Phosphoserine modification is found at S1441. The span at 1462 to 1483 (DSHKVLPRDLEKEDAPQEKERP) shows a compositional bias: basic and acidic residues. S1488 and S1506 each carry phosphoserine. Disordered regions lie at residues 1512–1627 (QLKQ…KRVD) and 1642–1806 (ALKT…ENQV). Positions 1522 to 1531 (TEPKDTDTLV) are enriched in basic and acidic residues. Residues 1537–1568 (QYGTWTEQCQSGESLATESPDSSATSTRKQPP) show a composition bias toward polar residues. Phosphoserine occurs at positions 1555 and 1662. Basic residues predominate over residues 1649–1666 (LSKRSRRRAPISHSLRRS). 2 stretches are compositionally biased toward basic and acidic residues: residues 1667 to 1677 (RFSESESRSPL) and 1689 to 1714 (DSTE…ERTP). Residues S1701, S1757, S1760, and S1786 each carry the phosphoserine modification. The span at 1753 to 1764 (PQPKSPKSPFQP) shows a compositional bias: low complexity.

This is an uncharacterized protein from Homo sapiens (Human).